Here is a 342-residue protein sequence, read N- to C-terminus: Trace amine-associated receptor 3 (342 aa).

The Extracellular portion of the chain corresponds to 1-35 (MDLIYIPEDLSSCPKFGNKSCPPTNRSFRVRLIMY). N-linked (GlcNAc...) asparagine glycosylation is found at Asn-18 and Asn-25. Disulfide bonds link Cys-21-Cys-185 and Cys-104-Cys-189. The helical transmembrane segment at 36 to 56 (LLMTGAMVITIFGNLVIIISI) threads the bilayer. At 57–68 (SHFKQLHSPTNF) the chain is on the cytoplasmic side. A helical transmembrane segment spans residues 69-89 (LILSMATTDFLLGFVIMPYSM). Residues 90 to 150 (VRSVESCWYF…TTMTASMIKR (61 aa)) lie on the Extracellular side of the membrane. The helical transmembrane segment at 151–168 (LLFFCWAAPALFSFGLVL) threads the bilayer. At 169-172 (SEAN) the chain is on the cytoplasmic side. Positions 173–186 (VSGMQSYEILIACF) are extracellular Loop 2 (ECL2). Residues 173–193 (VSGMQSYEILIACFNFCALTF) form a helical membrane-spanning segment. At 194 to 198 (NKFWG) the chain is on the extracellular side. A helical transmembrane segment spans residues 199-223 (TILFTTCFFTPGSIMVGIYGKIFIV). Over 224 to 256 (SRRHARALGNMPENTKGAGRNLSKKKDRKAAKT) the chain is Cytoplasmic. A helical membrane pass occupies residues 257 to 277 (LGIVMGVFLACWLPCFLAVLI). The Extracellular segment spans residues 278 to 286 (DPYLDYSTP). A helical membrane pass occupies residues 287 to 307 (IIVLDLLVWLGYFNSTCNPLI). The Cytoplasmic portion of the chain corresponds to 308–342 (HGFFYPWFRKALEHIVSGKIFRSNSDTANLFPEAH).

Belongs to the G-protein coupled receptor 1 family.

It is found in the cell membrane. Olfactory receptor activated by several primary trace amines, including isoamylamine. Activated by isoamylamine and cyclohexylamine, but not to the corresponding alcohols, isoamylalcohol and cyclohexanol. This receptor is probably mediated by the G(s)-class of G-proteins which activate adenylate cyclase. The sequence is that of Trace amine-associated receptor 3 (Taar3) from Rattus norvegicus (Rat).